The following is a 282-amino-acid chain: DNA-binding transcriptional repressor YiaJ (282 aa).

Over residues 1 to 20 the composition is skewed to basic and acidic residues; sequence MGKEVMGKKENEMAQEKERP. Positions 1 to 21 are disordered; it reads MGKEVMGKKENEMAQEKERPA. The HTH iclR-type domain occupies 23 to 85; the sequence is SQSLFRGLML…PAAGSYRLTT (63 aa). A DNA-binding region (H-T-H motif) is located at residues 45–64; sequence LAHLSELAGLNKSTVHRLLQ. Residues 100 to 272 enclose the IclR-ED domain; that stretch reads IIHIAAPHLE…AQAISNELGF (173 aa).

Negatively controls the transcription of the yiaKLMNOPQRS operon, which may be involved in the utilization of 2,3-diketo-L-gulonate. The chain is DNA-binding transcriptional repressor YiaJ (yiaJ) from Escherichia coli (strain K12).